Consider the following 223-residue polypeptide: Pre-mRNA-splicing factor SPF27 (223 aa).

Residues 139 to 223 (NENLLHMIDC…GENKENIEDY (85 aa)) adopt a coiled-coil conformation.

The protein belongs to the SPF27 family. As to quaternary structure, component of the pre-catalytic and catalytic spliceosome complexes. Component of the postcatalytic spliceosome P complex.

It localises to the nucleus. In terms of biological role, required for pre-mRNA splicing as component of the activated spliceosome. May have a scaffolding role in the spliceosome assembly as it contacts all other components of the core complex. The sequence is that of Pre-mRNA-splicing factor SPF27 (bcas2) from Xenopus tropicalis (Western clawed frog).